The following is a 789-amino-acid chain: Zinc finger protein GLIS1 (789 aa).

Basic and acidic residues-rich tracts occupy residues 1-16 (MHCE…RPKE) and 63-74 (RAHDLLRPRSPR). Disordered regions lie at residues 1-29 (MHCE…GPVS), 53-93 (LLPR…YGHS), and 278-304 (PPLP…QEGS). Positions 80 to 92 (KTGSGKVNGSYGH) are enriched in polar residues. The C2H2-type 1 zinc finger occupies 366–391 (QACRWVDCCAAYEQQEELVRHIEKSH). The C2H2-type 2; atypical zinc finger occupies 400–427 (FTCFWAGCVRRYKPFNARYKLLIHMRVH). C2H2-type zinc fingers lie at residues 433 to 457 (NKCM…LRSH), 463 to 487 (YLCQ…QRTH), and 493 to 517 (YACQ…VKAH). Disordered regions lie at residues 506–529 (DPSS…KKLH) and 573–684 (VYPG…QGYQ). A Bipartite nuclear localization signal motif is present at residues 511–527 (RKHVKAHSAKEQQVRKK). Residues 648–658 (ASQSQSPGGQS) are compositionally biased toward low complexity.

It belongs to the GLI C2H2-type zinc-finger protein family. In terms of assembly, interacts with KLF4. Interacts with POU5F1 and/or POU5F1B. Interacts with SOX2. In terms of tissue distribution, in the adult, expressed highly in placenta and kidney and at lower levels in the testis, brain, colon, brown fat tissue and thymus. During embryo development, expressed in the frontal nasal region, branchial arches, somites, vibrissal and hair follicles, limb buds, craniofacial regions, ventral part of the tail, intervertebral disks, teeth, eyes and kidney.

It localises to the nucleus. In terms of biological role, acts both as a repressor and an ctivator of transcription. Binds to the consensus sequence 5'-GACCACCCAC-3'. By controlling the expression of genes involved in cell differentiation inhibits the lineage commitment of multipotent cells. Prevents, for instance, the differentiation of multipotent mesenchymal cells into adipocyte and osteoblast. The protein is Zinc finger protein GLIS1 of Mus musculus (Mouse).